Reading from the N-terminus, the 355-residue chain is MKKNKLELVYLRAFICVIIIVTHLLTQITLENEQMSDSSLILQYYIRNIFIFGTPSFIILSQLLTTLNYESVTINYLFSRFKYIFIPYLLIGLFYSYSESLITASSFKKQFIENVVLGQWYGYFIIIIMQFFVLSYIIYKINFRLFNSKILLLLAFIVQQSYLHYFLNNDTFHQFMTHYYPLSENTMILGWIFYFFLGGYIGYNYEKILSFLEKYLIIVIMLTLGAYVLFIAVSGSDYWNVTSFTYTLTLYNSVMFFLLLGVCMHFKTMLLNTIKAISAFSFFIYLLHPIILDSLFAYTNIFEDNTIVFLAISLLMILGICIGVGMMLREFYIFRFVIGKQPYKLQFDQYQPNWN.

The next 10 helical transmembrane spans lie at 13-30 (AFIC…QITL), 45-67 (YIRN…LTTL), 74-96 (INYL…LFYS), 116-138 (VLGQ…SYII), 145-167 (LFNS…HYFL), 187-204 (MILG…IGYN), 211-233 (FLEK…FIAV), 243-262 (SFTY…LLGV), 269-291 (MLLN…HPII), and 306-328 (TIVF…GMML).

The protein belongs to the acyltransferase 3 family.

It is found in the cell membrane. In terms of biological role, presumably involved in the export of the biofilm adhesin polysaccharide poly-beta-1,6-N-acetyl-D-glucosamine (PNAG, also referred to as PIA) across the cell membrane. This Staphylococcus epidermidis protein is Probable poly-beta-1,6-N-acetyl-D-glucosamine export protein (icaC).